Consider the following 66-residue polypeptide: Small ribosomal subunit protein bS21A (66 aa).

Basic residues predominate over residues 34-46 (KHYEKPSVKKKRK). The disordered stretch occupies residues 34–66 (KHYEKPSVKKKRKQMEAERKRRKAQRFRKPDRD).

It belongs to the bacterial ribosomal protein bS21 family.

The chain is Small ribosomal subunit protein bS21A from Geobacter sulfurreducens (strain ATCC 51573 / DSM 12127 / PCA).